Here is a 1437-residue protein sequence, read N- to C-terminus: FYVE and coiled-coil domain-containing protein 1 (1437 aa).

Position 2 is an N-acetylalanine (Ala2). Positions 4–30 (SSTETQLQRIIRDLQDAATELSHEFKE) form a coiled coil. An RUN domain is found at 36-169 (TDDSTSLHKF…VQFDLAPRGY (134 aa)). Ser196 carries the post-translational modification Phosphoserine. 3 coiled-coil regions span residues 223 to 270 (SLNN…VSRQ), 305 to 846 (SQAT…SEGA), and 873 to 1110 (ALTA…KDAL). Thr372 is subject to Phosphothreonine. At Ser837 the chain carries Phosphoserine. The FYVE-type zinc-finger motif lies at 1132-1190 (DMEVNHCHDCKREFSWIVRRHHCRICGRIFCYYCCNNYVVTKPSGKKERCCRACFQKFG). Positions 1138, 1141, 1154, 1157, 1162, 1165, 1182, and 1185 each coordinate Zn(2+). Disordered stretches follow at residues 1191–1227 (EGSG…SQGI) and 1253–1289 (SGSS…TEDV). The segment covering 1194–1206 (GSNDSSGSGTSQG) has biased composition (low complexity). 2 stretches are compositionally biased toward polar residues: residues 1218-1227 (SPQSIGSQGI) and 1253-1283 (SGSS…SLTP). Residues 1296–1425 (EICLLKSGEL…SKKVLYHLTV (130 aa)) form the GOLD domain.

In terms of assembly, can form homodimers. Interacts (via C-terminus) with MAP1LC3B. Interacts with RAB7A; the interaction with RAB7A induces FYCO1 recruitment to late endosomal/lysosomal compartments. In terms of tissue distribution, expressed in heart and testis. Expressed in the eye lens.

The protein localises to the cytoplasmic vesicle. It is found in the autophagosome. Its subcellular location is the endosome. The protein resides in the lysosome. Its function is as follows. May mediate microtubule plus end-directed vesicle transport. This is FYVE and coiled-coil domain-containing protein 1 (Fyco1) from Mus musculus (Mouse).